The sequence spans 120 residues: Chemokine vCXCL1 (120 aa).

The protein belongs to the intercrine alpha (chemokine CxC) family. In terms of assembly, interacts with host CXCR1 and CXCR2.

Functionally, acts as a functional chemokine, inducing calcium mobilization, chemotaxis, and degranulation of neutrophils. Contributes to the induction of neutrophil chemotaxis by interacting with host CXCR1 and CXCR2 receptors. This Human cytomegalovirus (strain Merlin) (HHV-5) protein is Chemokine vCXCL1 (UL146).